The primary structure comprises 251 residues: Small ribosomal subunit protein uS2 (251 aa).

Belongs to the universal ribosomal protein uS2 family.

The protein is Small ribosomal subunit protein uS2 of Synechococcus sp. (strain ATCC 27144 / PCC 6301 / SAUG 1402/1) (Anacystis nidulans).